Here is a 406-residue protein sequence, read N- to C-terminus: E3 ubiquitin-protein ligase RING1 (406 aa).

Phosphothreonine is present on threonine 24. Residues 30 to 234 are necessary for transcriptional repression; sequence MDGTEIAVSP…GGAGSEDSGD (205 aa). Residue serine 38 is modified to Phosphoserine. An RING-type zinc finger spans residues 48 to 88; it reads CPICLDMLKNTMTTKECLHRFCSDCIVTALRSGNKECPTCR. Serine 140, serine 187, and serine 190 each carry phosphoserine. Disordered stretches follow at residues 151-263 and 309-354; these read HRAQ…GEIE and QQQE…PSLE. Residues 175–187 show a composition bias toward acidic residues; the sequence is EPGEGEGDGEDIS. The Nuclear localization signal signature appears at 201–204; sequence KRPR. Residues 205–228 are compositionally biased toward gly residues; the sequence is GGGAGGSSVGTGGGAAGGACGGAG. Phosphothreonine is present on threonine 215. A phosphoserine mark is found at serine 229 and serine 232. The interval 230–406 is necessary for interaction with CBX2; sequence EDSGDRGGTL…LCYAPTKDPK (177 aa). The span at 235–244 shows a compositional bias: gly residues; it reads RGGTLGGGTL. A compositionally biased stretch (pro residues) spans 246–258; that stretch reads PPSPPGAPSPPEP. Serine 248 and serine 254 each carry phosphoserine. Gly residues predominate over residues 317-343; that stretch reads GGPGGGASDTGGPDGGGGERGVSGGGE.

In terms of assembly, component of chromatin-associated Polycomb (PcG) complexes. Part of the E2F6.com-1 complex in G0 phase composed of E2F6, MGA, MAX, TFDP1, CBX3, BAT8, EUHMTASE1, RING1, RNF2/RING2 MBLR, L3MBTL2 and YAF2. Interacts with CBX2 and PCGF6. Component of a PRC1-like complex. Component of repressive BCOR complex containing Polycomb group subcomplex at least composed of RYBP, PCGF1, BCOR and RNF2/RING2. Interacts with BMI1, PHC2, PCGF2, RNF2; CBX6, CBX7 and CBX8. Interacts with MN1. Interacts with USP26.

Its subcellular location is the nucleus speckle. It catalyses the reaction S-ubiquitinyl-[E2 ubiquitin-conjugating enzyme]-L-cysteine + [acceptor protein]-L-lysine = [E2 ubiquitin-conjugating enzyme]-L-cysteine + N(6)-ubiquitinyl-[acceptor protein]-L-lysine.. The protein operates within protein modification; protein ubiquitination. Its function is as follows. Constitutes one of the E3 ubiquitin-protein ligases that mediate monoubiquitination of 'Lys-119' of histone H2A, thereby playing a central role in histone code and gene regulation. H2A 'Lys-119' ubiquitination gives a specific tag for epigenetic transcriptional repression and participates in X chromosome inactivation of female mammals. Essential component of a Polycomb group (PcG) multiprotein PRC1-like complex, a complex class required to maintain the transcriptionally repressive state of many genes, including Hox genes, throughout development. PcG PRC1 complex acts via chromatin remodeling and modification of histones, rendering chromatin heritably changed in its expressibility. Compared to RNF2/RING2, it does not have the main E3 ubiquitin ligase activity on histone H2A, and it may rather act as a modulator of RNF2/RING2 activity. This Rattus norvegicus (Rat) protein is E3 ubiquitin-protein ligase RING1.